The sequence spans 452 residues: UDP-N-acetylmuramoylalanine--D-glutamate ligase (452 aa).

Residue 115–121 (GTNGKTT) participates in ATP binding.

It belongs to the MurCDEF family.

The protein resides in the cytoplasm. The enzyme catalyses UDP-N-acetyl-alpha-D-muramoyl-L-alanine + D-glutamate + ATP = UDP-N-acetyl-alpha-D-muramoyl-L-alanyl-D-glutamate + ADP + phosphate + H(+). It participates in cell wall biogenesis; peptidoglycan biosynthesis. Functionally, cell wall formation. Catalyzes the addition of glutamate to the nucleotide precursor UDP-N-acetylmuramoyl-L-alanine (UMA). The protein is UDP-N-acetylmuramoylalanine--D-glutamate ligase of Elusimicrobium minutum (strain Pei191).